The chain runs to 765 residues: Phosphoribosylformylglycinamidine synthase subunit PurL (765 aa).

The segment covering 1–13 (MTVSPTSAPTQAI) has biased composition (polar residues). The interval 1–32 (MTVSPTSAPTQAIDTVERAATTPDEPQPFGEL) is disordered. Residue histidine 65 is part of the active site. Tyrosine 68 and lysine 112 together coordinate ATP. Glutamate 114 contributes to the Mg(2+) binding site. Substrate-binding positions include 115–118 (SHNH) and arginine 137. Residue histidine 116 is the Proton acceptor of the active site. Residue aspartate 138 coordinates Mg(2+). Substrate is bound at residue glutamine 263. Aspartate 291 provides a ligand contact to Mg(2+). 335 to 337 (ESQ) contacts substrate. ATP-binding residues include asparagine 523 and glycine 560. Asparagine 561 contributes to the Mg(2+) binding site. Serine 563 lines the substrate pocket.

This sequence belongs to the FGAMS family. Monomer. Part of the FGAM synthase complex composed of 1 PurL, 1 PurQ and 2 PurS subunits.

The protein resides in the cytoplasm. It carries out the reaction N(2)-formyl-N(1)-(5-phospho-beta-D-ribosyl)glycinamide + L-glutamine + ATP + H2O = 2-formamido-N(1)-(5-O-phospho-beta-D-ribosyl)acetamidine + L-glutamate + ADP + phosphate + H(+). It functions in the pathway purine metabolism; IMP biosynthesis via de novo pathway; 5-amino-1-(5-phospho-D-ribosyl)imidazole from N(2)-formyl-N(1)-(5-phospho-D-ribosyl)glycinamide: step 1/2. In terms of biological role, part of the phosphoribosylformylglycinamidine synthase complex involved in the purines biosynthetic pathway. Catalyzes the ATP-dependent conversion of formylglycinamide ribonucleotide (FGAR) and glutamine to yield formylglycinamidine ribonucleotide (FGAM) and glutamate. The FGAM synthase complex is composed of three subunits. PurQ produces an ammonia molecule by converting glutamine to glutamate. PurL transfers the ammonia molecule to FGAR to form FGAM in an ATP-dependent manner. PurS interacts with PurQ and PurL and is thought to assist in the transfer of the ammonia molecule from PurQ to PurL. The sequence is that of Phosphoribosylformylglycinamidine synthase subunit PurL from Mycobacterium avium (strain 104).